Here is a 124-residue protein sequence, read N- to C-terminus: MSGRGKGGKAKGKSKSRSSRAGLQFPVGRIHRLLRKGNYAERIGAGAPVYLAAVMEYLAAEVLELAGNAARDNKKTRIIPRHLQLAIRNDEELNKLLSGVTIAQGGVLPNIQAVLLPKKTQKSK.

Over residues 1-18 (MSGRGKGGKAKGKSKSRS) the composition is skewed to basic residues. Residues 1-23 (MSGRGKGGKAKGKSKSRSSRAGL) are disordered. N-acetylserine is present on S2. Residue S2 is modified to Phosphoserine. Q104 is modified (N5-methylglutamine).

The protein belongs to the histone H2A family. The nucleosome is a histone octamer containing two molecules each of H2A, H2B, H3 and H4 assembled in one H3-H4 heterotetramer and two H2A-H2B heterodimers. The octamer wraps approximately 147 bp of DNA. In terms of processing, the N-terminal serine is acetylated. That serine is also phosphorylated in approximately 60% of the molecules isolated from erythrocytes.

Its subcellular location is the nucleus. The protein localises to the chromosome. In terms of biological role, core component of nucleosome. Nucleosomes wrap and compact DNA into chromatin, limiting DNA accessibility to the cellular machineries which require DNA as a template. Histones thereby play a central role in transcription regulation, DNA repair, DNA replication and chromosomal stability. DNA accessibility is regulated via a complex set of post-translational modifications of histones, also called histone code, and nucleosome remodeling. This is Histone H2A from Sipunculus nudus (Sipunculan worm).